Consider the following 234-residue polypeptide: HTH-type transcriptional regulator ArcR (234 aa).

40–129 (VRHYTKGQVI…MAFLCKANDD (90 aa)) lines the a nucleoside 3',5'-cyclic phosphate pocket. One can recognise an HTH crp-type domain in the interval 155-228 (KFAKDRIIKL…HKNWLVSKHL (74 aa)). A DNA-binding region (H-T-H motif) is located at residues 188-207 (IQLMSDMAGISRETAGHIIH).

The protein resides in the cytoplasm. Its function is as follows. Positively regulates the expression of the arcABDCR operon under anaerobic conditions, thus playing an essential role in arginine catabolism. May also control the expression of genes encoding proteins which are involved in anaerobic metabolism. Can bind cyclic AMP. This is HTH-type transcriptional regulator ArcR (arcR) from Staphylococcus aureus (strain Mu50 / ATCC 700699).